The sequence spans 688 residues: PTS system glucoside-specific EIICBA component (688 aa).

Positions 3–427 constitute a PTS EIIC type-1 domain; the sequence is KKLFGQLQRI…FKLKTPGRED (425 aa). 10 helical membrane-spanning segments follow: residues 12-32, 81-101, 137-157, 182-202, 223-243, 284-304, 315-335, 340-360, 364-384, and 395-415; these read IGKA…LLAF, LGLA…YLIM, LVLG…MGAL, FVPI…SFAW, LTTF…LHHI, AFTT…AFAI, VVGG…ITEP, FLFV…TSFL, LLGV…ILYG, and LVIP…DFAI. Positions 438–519 constitute a PTS EIIB type-1 domain; that stretch reads AKLPFDVLDA…AKIMSGEITK (82 aa). C460 serves as the catalytic Phosphocysteine intermediate; for EIIB activity. The PTS EIIA type-1 domain occupies 560 to 664; it reads DQVFAGKMMG…SIVTPMIITN (105 aa). Catalysis depends on H612, which acts as the Tele-phosphohistidine intermediate; for EIIA activity.

It is found in the cell membrane. Functionally, the phosphoenolpyruvate-dependent sugar phosphotransferase system (sugar PTS), a major carbohydrate active -transport system, catalyzes the phosphorylation of incoming sugar substrates concomitantly with their translocation across the cell membrane. This system is involved in alpha- and beta-glucoside transport. The protein is PTS system glucoside-specific EIICBA component (glcB) of Staphylococcus aureus (strain USA300).